A 73-amino-acid chain; its full sequence is SIFamide-related peptide (73 aa).

The first 23 residues, 1 to 23, serve as a signal peptide directing secretion; that stretch reads MVSIRLTFALAIVAIIFAFSVDA. F35 is modified (phenylalanine amide). The propeptide occupies 39-73; that stretch reads SNTMTDYEFTSRALSAICEVASETCTAWMSRQESN.

Expressed in brain, the retrocerebral complex and in ventral, thoracic and abdominal ganglia (at protein level).

It is found in the secreted. The polypeptide is SIFamide-related peptide (Camponotus floridanus (Florida carpenter ant)).